A 336-amino-acid chain; its full sequence is UDP-N-acetylenolpyruvoylglucosamine reductase (336 aa).

The FAD-binding PCMH-type domain occupies 17 to 188 (LRSLAERFVE…WDVTFRLPKK (172 aa)). The active site involves R164. S237 (proton donor) is an active-site residue. E332 is an active-site residue.

This sequence belongs to the MurB family. Requires FAD as cofactor.

Its subcellular location is the cytoplasm. The enzyme catalyses UDP-N-acetyl-alpha-D-muramate + NADP(+) = UDP-N-acetyl-3-O-(1-carboxyvinyl)-alpha-D-glucosamine + NADPH + H(+). It participates in cell wall biogenesis; peptidoglycan biosynthesis. Functionally, cell wall formation. This Bdellovibrio bacteriovorus (strain ATCC 15356 / DSM 50701 / NCIMB 9529 / HD100) protein is UDP-N-acetylenolpyruvoylglucosamine reductase.